A 173-amino-acid polypeptide reads, in one-letter code: Photosystem I assembly protein Ycf3 (173 aa).

3 TPR repeats span residues A35–A68, G72–Q105, and G120–G153.

The protein belongs to the Ycf3 family.

The protein localises to the cellular thylakoid membrane. Functionally, essential for the assembly of the photosystem I (PSI) complex. May act as a chaperone-like factor to guide the assembly of the PSI subunits. The protein is Photosystem I assembly protein Ycf3 of Prochlorococcus marinus (strain SARG / CCMP1375 / SS120).